Reading from the N-terminus, the 188-residue chain is Adenine phosphoribosyltransferase (188 aa).

The protein belongs to the purine/pyrimidine phosphoribosyltransferase family. In terms of assembly, homodimer.

Its subcellular location is the cytoplasm. The enzyme catalyses AMP + diphosphate = 5-phospho-alpha-D-ribose 1-diphosphate + adenine. It participates in purine metabolism; AMP biosynthesis via salvage pathway; AMP from adenine: step 1/1. Its function is as follows. Catalyzes a salvage reaction resulting in the formation of AMP, that is energically less costly than de novo synthesis. The chain is Adenine phosphoribosyltransferase from Burkholderia lata (strain ATCC 17760 / DSM 23089 / LMG 22485 / NCIMB 9086 / R18194 / 383).